Reading from the N-terminus, the 64-residue chain is Large ribosomal subunit protein bL35 (64 aa).

Positions Met-1 to Lys-14 are enriched in basic residues. A disordered region spans residues Met-1 to Ala-50. The span at Leu-21–Pro-36 shows a compositional bias: basic and acidic residues.

The protein belongs to the bacterial ribosomal protein bL35 family.

In Corynebacterium diphtheriae (strain ATCC 700971 / NCTC 13129 / Biotype gravis), this protein is Large ribosomal subunit protein bL35.